The primary structure comprises 212 residues: Uracil phosphoribosyltransferase (212 aa).

5-phospho-alpha-D-ribose 1-diphosphate contacts are provided by residues R78, R103, and 130-138 (DPMLATGGS). Residues I193 and 198–200 (GDA) contribute to the uracil site. D199 provides a ligand contact to 5-phospho-alpha-D-ribose 1-diphosphate.

The protein belongs to the UPRTase family. Mg(2+) serves as cofactor.

The catalysed reaction is UMP + diphosphate = 5-phospho-alpha-D-ribose 1-diphosphate + uracil. It participates in pyrimidine metabolism; UMP biosynthesis via salvage pathway; UMP from uracil: step 1/1. Its activity is regulated as follows. Allosterically activated by GTP. Functionally, catalyzes the conversion of uracil and 5-phospho-alpha-D-ribose 1-diphosphate (PRPP) to UMP and diphosphate. This chain is Uracil phosphoribosyltransferase, found in Azotobacter vinelandii (strain DJ / ATCC BAA-1303).